Consider the following 70-residue polypeptide: MSKQKKFEENLAELETIVQSLENGEIALEDAITAFQKGMVLSKELQATLDKAEKTLVKVMQEDGTESDFE.

This sequence belongs to the XseB family. As to quaternary structure, heterooligomer composed of large and small subunits.

The protein localises to the cytoplasm. It carries out the reaction Exonucleolytic cleavage in either 5'- to 3'- or 3'- to 5'-direction to yield nucleoside 5'-phosphates.. In terms of biological role, bidirectionally degrades single-stranded DNA into large acid-insoluble oligonucleotides, which are then degraded further into small acid-soluble oligonucleotides. The chain is Exodeoxyribonuclease 7 small subunit from Streptococcus pneumoniae serotype 2 (strain D39 / NCTC 7466).